Here is a 230-residue protein sequence, read N- to C-terminus: Transmembrane 4 L6 family member 20 (230 aa).

Residues 1–11 are Lumenal-facing; the sequence is MTCCEGWTSCN. Residues 12–32 form a helical membrane-spanning segment; that stretch reads GFSLLVLLLLGVTLNAIPLIL. Over 33–44 the chain is Cytoplasmic; that stretch reads NFVDEDQFFENP. The helical transmembrane segment at 45-65 threads the bilayer; that stretch reads ISCFEWWFPGIIGAGVMAIPA. At 66 to 83 the chain is on the lumenal side; sequence TTMSLAARKRACCNNKTG. Residues 84–104 traverse the membrane as a helical segment; the sequence is MFLSSLLNAITVIGAAYCLLV. At 105–185 the chain is on the cytoplasmic side; it reads SIQALAEGPL…HFNSIENQHR (81 aa). Residues 186 to 206 form a helical membrane-spanning segment; the sequence is IIHFSVFLGLLLVGILEILFG. At 207-230 the chain is on the lumenal side; sequence LSQIIIGFFGCLCGGVSNGRSQIV.

This sequence belongs to the L6 tetraspanin family. Glycosylated at Asn-132 in presence of ceramide which inverts the orientation of TM4SF20 in membranes exposing these residues to the endoplasmic reticulum lumen. Post-translationally, cleaved by signal peptidase at Ser-14 but the peptide does not act as a signal peptide. Cleavage is inhibited by ceramide which inverts the orientation of TM4SF20 in membranes exposing the N-terminus to the cytosol and not to the endoplasmic reticulum lumen.

It localises to the membrane. The protein resides in the endoplasmic reticulum membrane. Its function is as follows. Polytopic transmembrane protein. Inhibits regulated intramembrane proteolysis (RIP) of CREB3L1, inhibiting its activation and the induction of collagen synthesis. In response to ceramide, which alters TM4SF20 membrane topology, stimulates RIP activation of CREB3L1. Ceramide reverses the direction through which transmembrane helices are translocated into the endoplasmic reticulum membrane during translation of TM4SF20, this mechanism is called 'regulated alternative translocation' (RAT) and regulates the function of the transmembrane protein. The sequence is that of Transmembrane 4 L6 family member 20 (TM4SF20) from Bos taurus (Bovine).